Here is a 152-residue protein sequence, read N- to C-terminus: Small ribosomal subunit protein uS13 (152 aa).

It belongs to the universal ribosomal protein uS13 family. As to quaternary structure, part of the 30S ribosomal subunit. Forms a loose heterodimer with protein S19. Forms two bridges to the 50S subunit in the 70S ribosome.

Functionally, located at the top of the head of the 30S subunit, it contacts several helices of the 16S rRNA. In the 70S ribosome it contacts the 23S rRNA (bridge B1a) and protein L5 of the 50S subunit (bridge B1b), connecting the 2 subunits; these bridges are implicated in subunit movement. The sequence is that of Small ribosomal subunit protein uS13 from Pyrobaculum arsenaticum (strain DSM 13514 / JCM 11321 / PZ6).